Here is a 55-residue protein sequence, read N- to C-terminus: Large ribosomal subunit protein bL33 (55 aa).

Belongs to the bacterial ribosomal protein bL33 family.

This Wigglesworthia glossinidia brevipalpis protein is Large ribosomal subunit protein bL33.